The chain runs to 552 residues: Dihydroxy-acid dehydratase (552 aa).

Position 78 (Asp78) interacts with Mg(2+). Position 119 (Cys119) interacts with [2Fe-2S] cluster. Mg(2+) contacts are provided by Asp120 and Lys121. At Lys121 the chain carries N6-carboxylysine. Cys191 contacts [2Fe-2S] cluster. Glu442 lines the Mg(2+) pocket. Ser468 functions as the Proton acceptor in the catalytic mechanism.

This sequence belongs to the IlvD/Edd family. In terms of assembly, homodimer. It depends on [2Fe-2S] cluster as a cofactor. The cofactor is Mg(2+).

The enzyme catalyses (2R)-2,3-dihydroxy-3-methylbutanoate = 3-methyl-2-oxobutanoate + H2O. It carries out the reaction (2R,3R)-2,3-dihydroxy-3-methylpentanoate = (S)-3-methyl-2-oxopentanoate + H2O. Its pathway is amino-acid biosynthesis; L-isoleucine biosynthesis; L-isoleucine from 2-oxobutanoate: step 3/4. The protein operates within amino-acid biosynthesis; L-valine biosynthesis; L-valine from pyruvate: step 3/4. Functionally, functions in the biosynthesis of branched-chain amino acids. Catalyzes the dehydration of (2R,3R)-2,3-dihydroxy-3-methylpentanoate (2,3-dihydroxy-3-methylvalerate) into 2-oxo-3-methylpentanoate (2-oxo-3-methylvalerate) and of (2R)-2,3-dihydroxy-3-methylbutanoate (2,3-dihydroxyisovalerate) into 2-oxo-3-methylbutanoate (2-oxoisovalerate), the penultimate precursor to L-isoleucine and L-valine, respectively. In Caldicellulosiruptor bescii (strain ATCC BAA-1888 / DSM 6725 / KCTC 15123 / Z-1320) (Anaerocellum thermophilum), this protein is Dihydroxy-acid dehydratase.